The following is a 107-amino-acid chain: Quaternary ammonium compound-resistance protein QacG (107 aa).

The next 4 membrane-spanning stretches (helical) occupy residues 1–21 (MHYL…SFLK), 26–46 (FTKL…FYFL), 57–77 (ITYA…SVIV), and 84–104 (LISI…NVFG).

The protein belongs to the drug/metabolite transporter (DMT) superfamily. Small multidrug resistance (SMR) (TC 2.A.7.1) family.

It is found in the cell membrane. Functionally, multidrug exporter. Is implicated for the resistance to bacteriocidal quaternary ammonium compounds. The polypeptide is Quaternary ammonium compound-resistance protein QacG (qacG) (Staphylococcus sp. (strain ST94)).